The primary structure comprises 1023 residues: Peroxisome proliferator-activated receptor gamma coactivator 1-beta (1023 aa).

Residues 1–91 (MAGNDCGALL…LFQIDSENEA (91 aa)) are abolishes DNA transcriptional activity when missing. A disordered region spans residues 122 to 148 (LSCTSASPAPSSAPPSPAPEKPSAPAP). Residues 132-146 (SSAPPSPAPEKPSAP) are compositionally biased toward pro residues. Residues 156-160 (LQKLL) carry the LXXLL motif 1 motif. Disordered regions lie at residues 165–210 (YPTS…QSQS), 237–278 (LQSP…PGAP), and 302–331 (RKLP…WSRH). Residues 343-347 (LRELL) carry the LXXLL motif 2 motif. 4 disordered regions span residues 369–463 (LTPR…LPWT), 520–567 (RELG…QLPP), 601–623 (TAGL…FKPD), and 636–683 (LPSP…GQKR). At Ser-384 the chain carries Phosphoserine. Basic and acidic residues predominate over residues 412–422 (LRLEVKREVRR). The segment covering 429 to 450 (QEEEDEEEEEEEEEEEKEEEEE) has biased composition (acidic residues). Position 524 is a phosphoserine (Ser-524). The span at 614-623 (PTEEDPFKPD) shows a compositional bias: basic and acidic residues. Residue Ser-638 is modified to Phosphoserine. The short motif at 691–694 (DHDY) is the HCFC1-binding-motif (HBM) element. Disordered regions lie at residues 717–758 (VHLE…LRDH) and 779–867 (DLAS…WSPA). The span at 793-805 (EDSSSSSGESSFL) shows a compositional bias: low complexity. The span at 806-825 (PEEEEEEGEEEEEDDEEEDS) shows a compositional bias: acidic residues. A compositionally biased stretch (low complexity) spans 849-866 (CSRSRSSSGSSPCHSWSP). One can recognise an RRM domain in the interval 902–976 (RVVYIQNLSS…RNEPSFQLSY (75 aa)).

As to quaternary structure, interacts with hepatocyte nuclear factor 4-alpha/HNF4A, Sterol regulatory binding transcription factor 1/SREBF1, PPAR-alpha/PPARA, thyroid hormone receptor beta/THRB and host cell factor/HCFC1. Interacts with estrogen-related receptor gamma/ESRRG and alpha/ESRRA. Interacts with PRDM16. Interacts with estrogen receptor alpha/ESR1. In terms of tissue distribution, ubiquitous with higher expression in heart, brain and skeletal muscle.

Its subcellular location is the nucleus. Its function is as follows. Plays a role of stimulator of transcription factors and nuclear receptors activities. Activates transcriptional activity of estrogen receptor alpha, nuclear respiratory factor 1 (NRF1) and glucocorticoid receptor in the presence of glucocorticoids. May play a role in constitutive non-adrenergic-mediated mitochondrial biogenesis as suggested by increased basal oxygen consumption and mitochondrial number when overexpressed. May be involved in fat oxidation and non-oxidative glucose metabolism and in the regulation of energy expenditure. Induces the expression of PERM1 in the skeletal muscle in an ESRRA-dependent manner. The chain is Peroxisome proliferator-activated receptor gamma coactivator 1-beta (PPARGC1B) from Homo sapiens (Human).